The sequence spans 276 residues: Rhomboid protease GlpG (276 aa).

The next 6 helical transmembrane spans lie at 94–114 (GPVT…MQIL), 142–162 (ALMH…WYLG), 169–189 (LGSG…GYVQ), 192–212 (FSGP…GYVW), 229–249 (LIIF…GMSM), and 250–270 (ANGA…VDSL). The active-site Nucleophile is serine 201. The active site involves histidine 254.

Belongs to the peptidase S54 family.

It localises to the cell inner membrane. It carries out the reaction Cleaves type-1 transmembrane domains using a catalytic dyad composed of serine and histidine that are contributed by different transmembrane domains.. Rhomboid-type serine protease that catalyzes intramembrane proteolysis. This chain is Rhomboid protease GlpG, found in Shigella flexneri serotype 5b (strain 8401).